The following is a 1007-amino-acid chain: Protocadherin alpha-C2 (1007 aa).

The first 42 residues, 1–42 (MEQAGTRPAATEHPRLRRPMPWLLLLPLLLLLLLLLPGPAAS), serve as a signal peptide directing secretion. 5 Cadherin domains span residues 43-148 (QLRY…SPRF), 149-257 (PRPN…SPAF), 258-365 (DQST…APEV), 374-469 (VPEN…PPSF), and 470-579 (LEDS…APHI). Topologically, residues 43–708 (QLRYSVPEEQ…RTYSEITLYL (666 aa)) are extracellular. N-linked (GlcNAc...) asparagine glycosylation is found at Asn-280 and Asn-436. N-linked (GlcNAc...) asparagine glycans are attached at residues Asn-586 and Asn-657. Positions 594-691 (GPRTAPAGYL…DRVSKILPDT (98 aa)) constitute a Cadherin 6 domain. Residues 709 to 729 (IIALSTVSFIFLLTIIILSII) form a helical membrane-spanning segment. Residues 730–1007 (KCYRYTAYGT…GNSTTDNSDQ (278 aa)) lie on the Cytoplasmic side of the membrane. PXXP repeat units lie at residues 856–859 (PRQP), 889–892 (PGGP), 930–933 (PGNP), and 948–951 (PGSP). Residues 856–951 (PRQPNPDWRY…PDKFIIPGSP (96 aa)) are 4 X 4 AA repeats of P-X-X-P. The disordered stretch occupies residues 885 to 1007 (LRAGPGGPDQ…GNSTTDNSDQ (123 aa)). Over residues 966–980 (DKSDFITFGKKEETK) the composition is skewed to basic and acidic residues.

Its subcellular location is the cell membrane. In terms of biological role, potential calcium-dependent cell-adhesion protein. May be involved in the establishment and maintenance of specific neuronal connections in the brain. In Pan troglodytes (Chimpanzee), this protein is Protocadherin alpha-C2 (PCDHAC2).